We begin with the raw amino-acid sequence, 358 residues long: MKNVAVLSGDGIGPEVMEIAISVLKKALGAKVSEFQFKEGFVGGIAIDKTGHPLPPETLKLCEESSAILFGSVGGPKWETLPPEKQPERGALLPLRKHFDLFANLRPAIIYPELKNASPVRSDIIGNGLDILILRELTGGIYFGQPKGREGSGQEEFAYDTMKYSRREIERIAKVAFQAARKRNNKVTSIDKANVLTTSVFWKEVVIELHKKEFSDVQLNHLYVDNAAMQLIVNPKQFDVVLCENMFGDILSDEASIITGSIGMLPSASLSESGFGLYEPSGGSAPDIAGKGVANPIAQVLSAALMLRYSFSMEEEANKIETAVRKTIASGKRTRDIAEVGSTIVGTKEIGQLIESFL.

NAD(+) is bound at residue 75-88; it reads GPKWETLPPEKQPE. Substrate contacts are provided by R96, R106, R135, and D225. 3 residues coordinate Mg(2+): D225, D249, and D253. Position 283-295 (283-295) interacts with NAD(+); sequence GSAPDIAGKGVAN.

It belongs to the isocitrate and isopropylmalate dehydrogenases family. LeuB type 1 subfamily. Homodimer. The cofactor is Mg(2+). Mn(2+) is required as a cofactor.

It localises to the cytoplasm. It carries out the reaction (2R,3S)-3-isopropylmalate + NAD(+) = 4-methyl-2-oxopentanoate + CO2 + NADH. The protein operates within amino-acid biosynthesis; L-leucine biosynthesis; L-leucine from 3-methyl-2-oxobutanoate: step 3/4. In terms of biological role, catalyzes the oxidation of 3-carboxy-2-hydroxy-4-methylpentanoate (3-isopropylmalate) to 3-carboxy-4-methyl-2-oxopentanoate. The product decarboxylates to 4-methyl-2 oxopentanoate. The sequence is that of 3-isopropylmalate dehydrogenase from Leptospira interrogans serogroup Icterohaemorrhagiae serovar copenhageni (strain Fiocruz L1-130).